Reading from the N-terminus, the 530-residue chain is Phosphoenolpyruvate carboxykinase (ATP) (530 aa).

Residues Arg-58, Tyr-195, and Lys-201 each coordinate substrate. ATP contacts are provided by residues Lys-201, His-220, and 236-244; that span reads GLSGTGKTT. Residues Lys-201 and His-220 each coordinate Mn(2+). Asp-257 is a binding site for Mn(2+). Residues Glu-285, Arg-321, 440-441, and Thr-446 contribute to the ATP site; that span reads RI. Arg-321 is a binding site for substrate.

The protein belongs to the phosphoenolpyruvate carboxykinase (ATP) family. Requires Mn(2+) as cofactor.

It is found in the cytoplasm. It catalyses the reaction oxaloacetate + ATP = phosphoenolpyruvate + ADP + CO2. Its pathway is carbohydrate biosynthesis; gluconeogenesis. Functionally, involved in the gluconeogenesis. Catalyzes the conversion of oxaloacetate (OAA) to phosphoenolpyruvate (PEP) through direct phosphoryl transfer between the nucleoside triphosphate and OAA. This is Phosphoenolpyruvate carboxykinase (ATP) from Staphylococcus haemolyticus (strain JCSC1435).